A 318-amino-acid chain; its full sequence is Aspartate carbamoyltransferase catalytic subunit (318 aa).

Residues Arg66 and Thr67 each coordinate carbamoyl phosphate. Lys94 contacts L-aspartate. Carbamoyl phosphate contacts are provided by Arg116, His144, and Gln147. 2 residues coordinate L-aspartate: Arg177 and Arg231. Gly272 and Pro273 together coordinate carbamoyl phosphate.

It belongs to the aspartate/ornithine carbamoyltransferase superfamily. ATCase family. Heterododecamer (2C3:3R2) of six catalytic PyrB chains organized as two trimers (C3), and six regulatory PyrI chains organized as three dimers (R2).

The catalysed reaction is carbamoyl phosphate + L-aspartate = N-carbamoyl-L-aspartate + phosphate + H(+). Its pathway is pyrimidine metabolism; UMP biosynthesis via de novo pathway; (S)-dihydroorotate from bicarbonate: step 2/3. In terms of biological role, catalyzes the condensation of carbamoyl phosphate and aspartate to form carbamoyl aspartate and inorganic phosphate, the committed step in the de novo pyrimidine nucleotide biosynthesis pathway. The polypeptide is Aspartate carbamoyltransferase catalytic subunit (Frankia casuarinae (strain DSM 45818 / CECT 9043 / HFP020203 / CcI3)).